Here is a 196-residue protein sequence, read N- to C-terminus: Rho-related protein racL (196 aa).

10-17 (GDGAVGKT) is a binding site for GTP. An Effector region motif is present at residues 32–40 (YQPTVFDNF). GTP is bound by residues 57–61 (DTAGQ) and 116–119 (TQND). A Cysteine methyl ester modification is found at C193. C193 is lipidated: S-geranylgeranyl cysteine. The propeptide at 194–196 (IIL) is removed in mature form.

This sequence belongs to the small GTPase superfamily. Rho family.

It localises to the cell membrane. This Dictyostelium discoideum (Social amoeba) protein is Rho-related protein racL (racL).